The following is a 195-amino-acid chain: NADH-quinone oxidoreductase subunit B (195 aa).

The [4Fe-4S] cluster site is built by Cys74, Cys75, Cys139, and Cys169.

Belongs to the complex I 20 kDa subunit family. NDH-1 is composed of 14 different subunits. Subunits NuoB, C, D, E, F, and G constitute the peripheral sector of the complex. The cofactor is [4Fe-4S] cluster.

The protein resides in the cell inner membrane. It catalyses the reaction a quinone + NADH + 5 H(+)(in) = a quinol + NAD(+) + 4 H(+)(out). Functionally, NDH-1 shuttles electrons from NADH, via FMN and iron-sulfur (Fe-S) centers, to quinones in the respiratory chain. The immediate electron acceptor for the enzyme in this species is believed to be ubiquinone. Couples the redox reaction to proton translocation (for every two electrons transferred, four hydrogen ions are translocated across the cytoplasmic membrane), and thus conserves the redox energy in a proton gradient. The sequence is that of NADH-quinone oxidoreductase subunit B from Methylobacterium sp. (strain 4-46).